A 445-amino-acid polypeptide reads, in one-letter code: MSATTHIDAPALPKRGKSKPFYKVLYVQVLFAIVVGVLVGWLSPHFATNEWIKALGDGFVKLIKMVIAPIIFCTVVSGIAHIQDARKVGRVGIKALLYFEVVSSFALVLGLIVGNLFPVGHGLAAKPDAGAVAKYVDQASHMSAVDFVLHIIPDSVVGAFAKGDILQVLLFAVLFGFALMALGERGHRLRDVIDDAAHAVFGVIAIVMKAAPIGAFGAMAFTIGKYGPAALGNLIGLVALFYATSALFVVLVLGTIAKFVGFNIFKFIGYIKDELLIVLGTSSSESALPQLMEKLERLGCSKSVVGLVVPTGYSFNLDGTNIYMTLATLFIAQALGIELSFGDQVAILLVAMLTSKGASGVTGAGFVTLAGTLAAVNPALVPGMAIVFSIDKFMSEVRALTNITGNGVAAVFVSWWEGELDHDRLRANLSRNVDPSDVETAVTTG.

Helical transmembrane passes span 24–44 (VLYV…WLSP), 62–82 (LIKM…IAHI), 105–125 (FALV…GLAA), 163–183 (GDIL…MALG), 201–221 (FGVI…AMAF), 234–254 (LIGL…LVLG), 322–342 (IYMT…LSFG), and 370–390 (AGTL…VFSI).

This sequence belongs to the dicarboxylate/amino acid:cation symporter (DAACS) (TC 2.A.23) family.

Its subcellular location is the cell inner membrane. Its function is as follows. Responsible for the transport of dicarboxylates such as succinate, fumarate, and malate from the periplasm across the membrane. This chain is C4-dicarboxylate transport protein, found in Rhodopseudomonas palustris (strain ATCC BAA-98 / CGA009).